The chain runs to 314 residues: MRFKGLDLNLLVVLDALLTERTLTAAASSINLSQPAMSAAVARLRDYFNDELFTTSGRERVLTPRAETLAPAVRSALLQIQCSIISWDPFNPAQSDRRFRIILSDFATLVFFEKVVERVAREAPAVSFELLPIDDDPDELLRRGDVDFLIFPELFMSSAHPRAALFDETLVCVGCSTNKQLPRQLTFERYMSMRHVAVKFGRTLKPSIEEQFFLEHGLKRRVEIVVQAFSMIPPMVSGTARIATMPFRLVQHFKKTFPLRIIELPLPLPTFTEAVQWPALHNSDPASIWLREILLQEASRMTSPGDAKRRPRQP.

Positions 6-63 (LDLNLLVVLDALLTERTLTAAASSINLSQPAMSAAVARLRDYFNDELFTTSGRERVLT) constitute an HTH lysR-type domain. The segment at residues 23 to 42 (LTAAASSINLSQPAMSAAVA) is a DNA-binding region (H-T-H motif).

Belongs to the LysR transcriptional regulatory family.

NodD regulates the expression of the nodABCFE genes which encode other nodulation proteins. NodD is also a negative regulator of its own expression. Binds flavenoids as inducers. This is Nodulation protein D 1 (nodD1) from Mesorhizobium japonicum (strain LMG 29417 / CECT 9101 / MAFF 303099) (Mesorhizobium loti (strain MAFF 303099)).